We begin with the raw amino-acid sequence, 221 residues long: Cysteine protease inhibitor 8 (221 aa).

Positions 1-26 (IPSINILSFLLLSSTLSLVAFARSFT) are cleaved as a signal peptide. Residues 27–42 (SENPIVLPTTCHDDDN) constitute a propeptide that is removed on maturation. Residues 29–34 (NPIVLP) carry the Vacuolar targeting signal motif. Intrachain disulfides connect Cys84–Cys136 and Cys184–Cys190.

It belongs to the protease inhibitor I3 (leguminous Kunitz-type inhibitor) family.

Its subcellular location is the vacuole. Functionally, inhibitor of cysteine proteases. May protect the plant by inhibiting proteases of invading organisms. In Solanum tuberosum (Potato), this protein is Cysteine protease inhibitor 8.